We begin with the raw amino-acid sequence, 470 residues long: Pancreatic lipase-related protein 2 (470 aa).

An N-terminal signal peptide occupies residues 1-18; the sequence is MMLFVWTTGLLLLATARG. Residues Cys-22 and Cys-28 are joined by a disulfide bond. The interval 94–106 is required for galactolipase activity; it reads IHGFIDNGEKDWL. Cys-110 and Cys-121 are disulfide-bonded. The Nucleophile role is filled by Ser-172. Asp-196 serves as the catalytic Charge relay system. Positions 207, 210, 212, and 215 each coordinate Ca(2+). Cys-257 and Cys-281 form a disulfide bridge. The required for galactolipase activity stretch occupies residues 258–280; the sequence is EKNIISTIVDVNGFLEGITSLAA. His-283 functions as the Charge relay system in the catalytic mechanism. 2 disulfides stabilise this stretch: Cys-305/Cys-316 and Cys-319/Cys-324. N-linked (GlcNAc...) asparagine glycans are attached at residues Asn-354 and Asn-429. In terms of domain architecture, PLAT spans 358-470; sequence WRYKVSVTLS…EDVLQSLSPC (113 aa). A disulfide bridge links Cys-454 with Cys-470.

Belongs to the AB hydrolase superfamily. Lipase family. As to expression, pancreas.

The protein localises to the secreted. It is found in the zymogen granule membrane. The protein resides in the cell projection. Its subcellular location is the neuron projection. The enzyme catalyses a triacylglycerol + H2O = a diacylglycerol + a fatty acid + H(+). The catalysed reaction is a 1,2-diacyl-3-O-(beta-D-galactosyl)-sn-glycerol + 2 H2O = 3-beta-D-galactosyl-sn-glycerol + 2 a fatty acid + 2 H(+). It catalyses the reaction 1,2,3-tri-(9Z-octadecenoyl)-glycerol + H2O = di-(9Z)-octadecenoylglycerol + (9Z)-octadecenoate + H(+). It carries out the reaction di-(9Z)-octadecenoylglycerol + H2O = (9Z-octadecenoyl)-glycerol + (9Z)-octadecenoate + H(+). The enzyme catalyses (9Z-octadecenoyl)-glycerol + H2O = glycerol + (9Z)-octadecenoate + H(+). The catalysed reaction is 1-(9Z-octadecenoyl)-glycerol + H2O = glycerol + (9Z)-octadecenoate + H(+). It catalyses the reaction 1,2,3-tripropanoylglycerol + H2O = dipropanoylglycerol + propanoate + H(+). It carries out the reaction 1,2,3-tributanoylglycerol + H2O = dibutanoylglycerol + butanoate + H(+). The enzyme catalyses 1,2,3-trioctanoylglycerol + H2O = dioctanoylglycerol + octanoate + H(+). The catalysed reaction is 1,2-didecanoylglycerol + H2O = decanoylglycerol + decanoate + H(+). It catalyses the reaction long chain 1,2-diacyl-3-O-beta-D-galactosyl-sn-glycerol + H2O = long chain acyl-3-O-beta-D-galactosyl-sn-glycerol + a fatty acid + H(+). It carries out the reaction 1,2-dioctanoyl-3-O-beta-D-galactosyl-sn-glycerol + H2O = octanoyl-3-(beta-D-galactosyl)-sn-glycerol + octanoate + H(+). The enzyme catalyses 1,2-didodecanoyl-3-beta-D-galactosyl-sn-glycerol + H2O = dodecanoyl-3-beta-D-galactosyl-sn-glycerol + dodecanoate + H(+). The catalysed reaction is 1-beta-D-galactosyl-2,3-didodecanoyl-sn-glycerol + H2O = 1-beta-D-galactosyl-dodecanoyl-sn-glycerol + dodecanoate + H(+). It catalyses the reaction a 1,2-diacyl-3-O-[alpha-D-galactosyl-(1-&gt;6)-beta-D-galactosyl]-sn-glycerol + H2O = acyl-3-O-[alpha-D-galactosyl-(1-&gt;6)-beta-D-galactosyl]-sn-glycerol + a fatty acid + H(+). It carries out the reaction long chain 1,2-diacyl-3-O-[alpha-D-galactosyl-(1-&gt;6)-beta-D-galactosyl]-sn-glycerol + H2O = long chain acyl-3-O-[alpha-D-galactosyl-(1-&gt;6)-beta-D-galactosyl]-sn-glycerol + a fatty acid + H(+). The enzyme catalyses 1,2-dioctanoyl-3-O-[alpha-D-galactosyl-(1-&gt;6)-beta-D-galactosyl]-sn-glycerol + H2O = octanoyl-3-O-[alpha-D-galactosyl-(1-&gt;6)-beta-D-galactosyl]-sn-glycerol + octanoate + H(+). The catalysed reaction is 1,2-didodecanoyl-3-O-[alpha-D-galactosyl-(1-&gt;6)-beta-D-galactosyl]-sn-glycerol + H2O = dodecanoyl-3-O-[alpha-D-galactosyl-(1-&gt;6)-beta-D-galactosyl]-sn-glycerol + dodecanoate + H(+). It catalyses the reaction a 1,2-diacyl-sn-glycero-3-phosphocholine + H2O = a monoacyl-sn-glycero-3-phosphocholine + a fatty acid + H(+). The protein operates within glycerolipid metabolism; triacylglycerol degradation. It functions in the pathway glycolipid metabolism. Triacylglycerol lipase activity is inhibited by increasing bile salts concentrations and not reactivated by CLPS. Lipase that primarily hydrolyzes triglycerides and galactosylglycerides. In neonates, may play a major role in pancreatic digestion of dietary fats such as milk fat globules enriched in long-chain triglycerides. Hydrolyzes short-, medium- and long-chain fatty acyls in triglycerides without apparent positional specificity. Can completely deacylate triacylglycerols. When the liver matures and bile salt synthesis increases, likely functions mainly as a galactolipase and monoacylglycerol lipase. Hydrolyzes monogalactosyldiglycerols (MGDG) and digalactosyldiacylglycerols (DGDG) present in a plant-based diet, releasing long-chain polyunsaturated fatty acids. Hydrolyzes medium- and long-chain fatty acyls in galactolipids. May act together with LIPF to hydrolyze partially digested triglycerides. Hydrolyzes long-chain monoglycerides with high efficiency. In cytotoxic T cells, contributes to perforin-dependent cell lysis, but is unlikely to mediate direct cytotoxicity. Also has low phospholipase activity. In neurons, required for the localization of the phospholipid 1-oleoyl-2-palmitoyl-PC (OPPC) to neurite tips through acyl chain remodeling of membrane phospholipids. The resulting OPPC-rich lipid membrane domain recruits the t-SNARE protein STX4 by selectively interacting with the STX4 transmembrane domain and this promotes surface expression of the dopamine transporter SLC6A3/DAT at neurite tips by facilitating fusion of SLC6A3-containing transport vesicles with the plasma membrane. The chain is Pancreatic lipase-related protein 2 from Myocastor coypus (Coypu).